Reading from the N-terminus, the 80-residue chain is MDNQNIKIYNHLKVHEIIYKTEELLNISDNRYKITIQIANRAKRKKYEDLDIIDDPTIKPIIRSILEMVDEITQPEIISD.

The protein belongs to the RNA polymerase subunit omega family.

The protein resides in the plastid. It localises to the chloroplast. It catalyses the reaction RNA(n) + a ribonucleoside 5'-triphosphate = RNA(n+1) + diphosphate. In terms of biological role, may be involved in RNA polymerase activity. In Gracilaria tenuistipitata var. liui (Red alga), this protein is Putative DNA-directed RNA polymerase subunit omega.